The chain runs to 412 residues: Argininosuccinate synthase (412 aa).

Residues 20–28 (AYSGGLDTS) and Ala48 contribute to the ATP site. 2 residues coordinate L-citrulline: Tyr100 and Ser105. Residue Gly130 participates in ATP binding. Thr132, Asn136, and Asp137 together coordinate L-aspartate. Residue Asn136 participates in L-citrulline binding. L-citrulline contacts are provided by Arg140, Ser189, Ser198, Glu274, and Tyr286.

Belongs to the argininosuccinate synthase family. Type 1 subfamily. As to quaternary structure, homotetramer.

It localises to the cytoplasm. It catalyses the reaction L-citrulline + L-aspartate + ATP = 2-(N(omega)-L-arginino)succinate + AMP + diphosphate + H(+). It participates in amino-acid biosynthesis; L-arginine biosynthesis; L-arginine from L-ornithine and carbamoyl phosphate: step 2/3. The protein is Argininosuccinate synthase of Shewanella halifaxensis (strain HAW-EB4).